The sequence spans 957 residues: MTENPFHYLVEPLSGTSDKTFFNVSKLKATEYDSLPYCIRVVLEAVVRNCDGVLVKEQDAFNILNWKATCEFKEIPFLPARVMLQDFTGIPAMVDFAAMRDAISKFGRDPKQVNPACPTDLIADHSLQLDFTKCIVAQNVSSVPTVETHKPTTKQSPGKTLGRKAQCRSQSGCKGACELGAAHGSSREQIENTPMLCPFHLQPIAEPEAALKSLEIEFNRNKERLQFFKWCTKAFHNVAVIPPETGTVHQVNLEFLSRVVMEEKGFIYPDSVLGTDSHTTMVNGLGILGLGVGGIESEAAMLGVPITLTLPEVIGCELTGAINPLATSIDVVLSITKHLKQAGVAGTFVEFFGNGVSQLSVADRTTIANMCPEYGATVAFFPVDSVTLRHLKQTGVDVQSVSTFETYLQAVKLLRQENVQQPEYSKVLQINLNSIVPYVSGPKRPQDRISVMDMKKDFEACLNEKTGLKGFQIPEKKQSIMVPVTYENSEYSLSHGCVVIAAVTSCTNNCNPSVMLTAGLLAKKAVEAGLTVKPYIKTSLSPGSGTVTYYLSASGVLPYLSKLGFDIIGYGCARCVGNTNPLPESIVTAIKEGELVACGVFSGNKHFEGNRCSCVCANYLASPPLVVAYALAGTVNIDLQTEALGENAQGEKIFLRDIWPSREEVLEVEETMVIPSMFSELKLKIEKQNTRWNLLDAPESTLFPWDLRSTFIRSPPFFHKLEKIPPPIQPIEKAHVLLYLGDSVTTDHMSPAGSIPRTSPAAKYLIQKNLIPREFNSYGARRGNDAVMTRGTFANMKLFNKLVGKTGPKTFHLPSGQIMDVFDAAELYQKAEIPLIIIAGKKYGLGNSRDWAAKGPFLLGVRVVIAESYEKIHKDHLVGMGIAPLQFLSGENAETLGLSAKEQYSFSLPVDLTPRHKIEVKTNTGKTFHVIAAFDNEAEVTFYKHGGILSYVARKYL.

[4Fe-4S] cluster is bound by residues Cys506, Cys572, and Cys575.

The protein belongs to the aconitase/IPM isomerase family. [4Fe-4S] cluster is required as a cofactor. Ubiquitinated and degraded by the proteasome in presence of high level of iron and oxygen.

The protein resides in the cytoplasm. Its function is as follows. RNA-binding protein that binds to iron-responsive elements (IRES), which are stem-loop structures found in the 5'-UTR of ferritin, and delta aminolevulinic acid synthase mRNAs, and in the 3'-UTR of transferrin receptor mRNA. Binding to the IRE element in ferritin results in the repression of its mRNA translation. Binding of the protein to the transferrin receptor mRNA inhibits the degradation of this otherwise rapidly degraded mRNA. This Xenopus tropicalis (Western clawed frog) protein is Iron-responsive element-binding protein 2 (ireb2).